The following is a 132-amino-acid chain: Hydrogenase maturation factor HypA (132 aa).

His2 contacts Ni(2+). Zn(2+) contacts are provided by Cys74, Cys77, Cys91, and Cys94.

It belongs to the HypA/HybF family.

Functionally, involved in the maturation of [NiFe] hydrogenases. Required for nickel insertion into the metal center of the hydrogenase. In Synechococcus sp. (strain JA-2-3B'a(2-13)) (Cyanobacteria bacterium Yellowstone B-Prime), this protein is Hydrogenase maturation factor HypA.